The chain runs to 346 residues: Phosphate acyltransferase (346 aa).

This sequence belongs to the PlsX family. As to quaternary structure, homodimer. Probably interacts with PlsY.

Its subcellular location is the cytoplasm. The enzyme catalyses a fatty acyl-[ACP] + phosphate = an acyl phosphate + holo-[ACP]. Its pathway is lipid metabolism; phospholipid metabolism. Catalyzes the reversible formation of acyl-phosphate (acyl-PO(4)) from acyl-[acyl-carrier-protein] (acyl-ACP). This enzyme utilizes acyl-ACP as fatty acyl donor, but not acyl-CoA. The chain is Phosphate acyltransferase from Synechococcus elongatus (strain ATCC 33912 / PCC 7942 / FACHB-805) (Anacystis nidulans R2).